The chain runs to 344 residues: Holliday junction branch migration complex subunit RuvB (344 aa).

The segment covering 1–10 has biased composition (low complexity); the sequence is MAIQSSSSGS. A disordered region spans residues 1-37; the sequence is MAIQSSSSGSKPPAPKRLVAPEATAAEGDGGRDEGLR. Positions 13–197 are large ATPase domain (RuvB-L); sequence PAPKRLVAPE…FGLIQRLEFY (185 aa). ATP contacts are provided by residues Leu-36, Arg-37, Gly-78, Lys-81, Thr-82, Thr-83, 144 to 146, Arg-187, Tyr-197, and Arg-234; that span reads EDF. Residue Thr-82 coordinates Mg(2+). Positions 198-268 are small ATPAse domain (RuvB-S); the sequence is SCSDLEAIVS…VVVEALAMHR (71 aa). Positions 271–344 are head domain (RuvB-H); that stretch reads GRGLDPSDRR…DAGRAHLEAA (74 aa). DNA contacts are provided by Arg-326 and Arg-331.

It belongs to the RuvB family. In terms of assembly, homohexamer. Forms an RuvA(8)-RuvB(12)-Holliday junction (HJ) complex. HJ DNA is sandwiched between 2 RuvA tetramers; dsDNA enters through RuvA and exits via RuvB. An RuvB hexamer assembles on each DNA strand where it exits the tetramer. Each RuvB hexamer is contacted by two RuvA subunits (via domain III) on 2 adjacent RuvB subunits; this complex drives branch migration. In the full resolvosome a probable DNA-RuvA(4)-RuvB(12)-RuvC(2) complex forms which resolves the HJ.

It localises to the cytoplasm. It catalyses the reaction ATP + H2O = ADP + phosphate + H(+). Functionally, the RuvA-RuvB-RuvC complex processes Holliday junction (HJ) DNA during genetic recombination and DNA repair, while the RuvA-RuvB complex plays an important role in the rescue of blocked DNA replication forks via replication fork reversal (RFR). RuvA specifically binds to HJ cruciform DNA, conferring on it an open structure. The RuvB hexamer acts as an ATP-dependent pump, pulling dsDNA into and through the RuvAB complex. RuvB forms 2 homohexamers on either side of HJ DNA bound by 1 or 2 RuvA tetramers; 4 subunits per hexamer contact DNA at a time. Coordinated motions by a converter formed by DNA-disengaged RuvB subunits stimulates ATP hydrolysis and nucleotide exchange. Immobilization of the converter enables RuvB to convert the ATP-contained energy into a lever motion, pulling 2 nucleotides of DNA out of the RuvA tetramer per ATP hydrolyzed, thus driving DNA branch migration. The RuvB motors rotate together with the DNA substrate, which together with the progressing nucleotide cycle form the mechanistic basis for DNA recombination by continuous HJ branch migration. Branch migration allows RuvC to scan DNA until it finds its consensus sequence, where it cleaves and resolves cruciform DNA. In Synechococcus sp. (strain RCC307), this protein is Holliday junction branch migration complex subunit RuvB.